Here is a 142-residue protein sequence, read N- to C-terminus: Small ribosomal subunit protein bS6 (142 aa).

Basic and acidic residues predominate over residues Asn-110–Glu-133. Residues Asn-110–Glu-142 form a disordered region.

This sequence belongs to the bacterial ribosomal protein bS6 family.

Functionally, binds together with bS18 to 16S ribosomal RNA. The chain is Small ribosomal subunit protein bS6 from Helicobacter pylori (strain P12).